A 219-amino-acid polypeptide reads, in one-letter code: Protein YNG1 (219 aa).

The PHD-type; degenerate zinc finger occupies 155 to 204 (EVYCFCRNVSYGPMVACDNPACPFEWFHYGCVGLKQAPKGKWYCSKDCKE). 8 residues coordinate Zn(2+): C158, C160, C171, C176, H182, C185, C198, and C202.

This sequence belongs to the ING family. Component of the NuA3 histone acetyltransferase (HAT) complex. The NuA3 HAT complex has 2 functionally distinct forms that participate in transcription. The NuA3a HAT complex is composed of at least NTO1, SAS3, TAF14, YNG1 and EAF6. The NuA3b HAT complex contains an additional subunit, PDP3. Interacts with H3K4me3 and to a lesser extent with H3K4me2.

It is found in the nucleus. Its function is as follows. Histone-binding component of the NuA3a histone acetyltransferase complex. Targets the NuA3a HAT complex via histone H3K4me3 to facilitate transcription initiation at promoter regions. SAS3 then acetylates H3K14, leading to transcription initiation at a subset of genes. YNG1 is required for the HAT activity of NuA3 but not for its integrity. Mediates the interaction of SAS3 with nucleosomes. The sequence is that of Protein YNG1 (YNG1) from Saccharomyces cerevisiae (strain ATCC 204508 / S288c) (Baker's yeast).